The sequence spans 448 residues: MASRIADSLFAFTGPQQCLPRVPKLAASSARVSPGVYAVKPIDLLLKGRTHRSRRCVAPVKRRIGCIKAVAAPVAPPSADSAEDREQLAESYGFRQIGEDLPENVTLKDIMDTLPKEVFEIDDLKALKSVLISVTSYTLGLFMIAKSPWYLLPLAWAWTGTAITGFFVIGHDCAHKSFSKNKLVEDIVGTLAFLPLVYPYEPWRFKHDRHHAKTNMLVHDTAWQPVPPEEFESSPVMRKAIIFGYGPIRPWLSIAHWVNWHFNLKKFRASEVNRVKISLACVFAFMAVGWPLIVYKVGILGWVKFWLMPWLGYHFWMSTFTMVHHTAPHIPFKPADEWNAAQAQLNGTVHCDYPSWIEILCHDINVHIPHHISPRIPSYNLRAAHESIQENWGKYTNLATWNWRLMKTIMTVCHVYDKEENYIPFDRLAPEESQPITFLKKAMPNYTA.

Residues Met1–Ala69 constitute a chloroplast transit peptide. Val70 bears the N-acetylvaline mark. 2 helical membrane passes run Leu124–Ile144 and Trp149–Ile169. The short motif at His171–His175 is the Histidine box-1 element. The Histidine box-2 motif lies at His207–His211. Helical transmembrane passes span Val282–Trp302 and Val303–Val323. Residues His367–His371 carry the Histidine box-3 motif.

Belongs to the fatty acid desaturase type 1 family.

It is found in the plastid. The protein resides in the chloroplast inner membrane. It carries out the reaction a (9Z)-octadecenoyl-containing glycerolipid + 2 reduced [2Fe-2S]-[ferredoxin] + O2 + 2 H(+) = a (9Z,12Z)-octadecadienoyl-containing glycerolipid + 2 oxidized [2Fe-2S]-[ferredoxin] + 2 H2O. Its pathway is lipid metabolism; polyunsaturated fatty acid biosynthesis. Its function is as follows. Chloroplast omega-6 fatty acid desaturase introduces the second double bond in the biosynthesis of 16:3 and 18:3 fatty acids, important constituents of plant membranes. It is thought to use ferredoxin as an electron donor and to act on fatty acids esterified to galactolipids, sulfolipids and phosphatidylglycerol. The sequence is that of Omega-6 fatty acid desaturase, chloroplastic from Arabidopsis thaliana (Mouse-ear cress).